A 322-amino-acid polypeptide reads, in one-letter code: Phosphatidylserine decarboxylase proenzyme (322 aa).

Residues Asp90, His147, and Ser254 each act as charge relay system; for autoendoproteolytic cleavage activity in the active site. Ser254 (schiff-base intermediate with substrate; via pyruvic acid; for decarboxylase activity) is an active-site residue. Ser254 is modified (pyruvic acid (Ser); by autocatalysis). Residues 293-322 form a disordered region; sequence PDAEPAPLPAEEIEAEHDASPLIDDKKDQV. Residues 308-322 show a composition bias toward basic and acidic residues; that stretch reads EHDASPLIDDKKDQV.

It belongs to the phosphatidylserine decarboxylase family. PSD-B subfamily. Prokaryotic type I sub-subfamily. Heterodimer of a large membrane-associated beta subunit and a small pyruvoyl-containing alpha subunit. Pyruvate is required as a cofactor. Is synthesized initially as an inactive proenzyme. Formation of the active enzyme involves a self-maturation process in which the active site pyruvoyl group is generated from an internal serine residue via an autocatalytic post-translational modification. Two non-identical subunits are generated from the proenzyme in this reaction, and the pyruvate is formed at the N-terminus of the alpha chain, which is derived from the carboxyl end of the proenzyme. The autoendoproteolytic cleavage occurs by a canonical serine protease mechanism, in which the side chain hydroxyl group of the serine supplies its oxygen atom to form the C-terminus of the beta chain, while the remainder of the serine residue undergoes an oxidative deamination to produce ammonia and the pyruvoyl prosthetic group on the alpha chain. During this reaction, the Ser that is part of the protease active site of the proenzyme becomes the pyruvoyl prosthetic group, which constitutes an essential element of the active site of the mature decarboxylase.

It is found in the cell membrane. It catalyses the reaction a 1,2-diacyl-sn-glycero-3-phospho-L-serine + H(+) = a 1,2-diacyl-sn-glycero-3-phosphoethanolamine + CO2. It participates in phospholipid metabolism; phosphatidylethanolamine biosynthesis; phosphatidylethanolamine from CDP-diacylglycerol: step 2/2. In terms of biological role, catalyzes the formation of phosphatidylethanolamine (PtdEtn) from phosphatidylserine (PtdSer). This is Phosphatidylserine decarboxylase proenzyme from Escherichia coli O127:H6 (strain E2348/69 / EPEC).